Here is a 244-residue protein sequence, read N- to C-terminus: Uridylate kinase (244 aa).

ATP is bound at residue 18–21; that stretch reads KVSG. Gly-60 is a UMP binding site. Residues Gly-61 and Arg-65 each coordinate ATP. Residues Asp-80 and 141 to 148 contribute to the UMP site; that span reads TGNPFCTT. The ATP site is built by Thr-168, Gln-169, Tyr-174, and Asp-177.

This sequence belongs to the UMP kinase family. In terms of assembly, homohexamer.

It localises to the cytoplasm. The catalysed reaction is UMP + ATP = UDP + ADP. The protein operates within pyrimidine metabolism; CTP biosynthesis via de novo pathway; UDP from UMP (UMPK route): step 1/1. Inhibited by UTP. Its function is as follows. Catalyzes the reversible phosphorylation of UMP to UDP. The polypeptide is Uridylate kinase (Rickettsia typhi (strain ATCC VR-144 / Wilmington)).